The chain runs to 1164 residues: Phospholipid-transporting ATPase IA (1164 aa).

Residues 1-75 lie on the Cytoplasmic side of the membrane; sequence MPTMRRTVSE…PRFLYSQFRR (75 aa). Residue S25 is modified to Phosphoserine. Phosphothreonine is present on T28. S29 carries the phosphoserine modification. The chain crosses the membrane as a helical span at residues 76–96; that stretch reads AANSFFLFIALLQQIPDVSPT. Residues 97–100 are Exoplasmic loop-facing; the sequence is GRYT. A helical transmembrane segment spans residues 101-121; the sequence is TLVPLLFILAVAAIKEIIEDI. At 122–297 the chain is on the cytoplasmic side; it reads KRHKADNAVN…SNVERITNVQ (176 aa). The chain crosses the membrane as a helical span at residues 298–318; sequence ILILFCILIAMSLVCSVGSAI. Topologically, residues 319–339 are exoplasmic loop; the sequence is WNRRHSGKDWYLHLHYGGASN. A helical membrane pass occupies residues 340-360; sequence FGLNFLTFIILFNNLIPISLL. The Cytoplasmic portion of the chain corresponds to 361-866; sequence VTLEVVKFTQ…KCILYCFYKN (506 aa). The active-site 4-aspartylphosphate intermediate is D409. Residues D409, K410, and T411 each contribute to the ATP site. Residue D409 coordinates Mg(2+). T411 contacts Mg(2+). S443 carries the phosphoserine modification. ATP contacts are provided by residues E508, F549, K572, R605, T685, G686, D687, 741–748, R775, and K781; that span reads ALIIDGKT. D801 is a binding site for Mg(2+). 2 residues coordinate ATP: N804 and D805. Mg(2+) is bound at residue D805. Residues 867–887 traverse the membrane as a helical segment; that stretch reads IVLYIIEIWFAFVNGFSGQIL. The Exoplasmic loop segment spans residues 888-890; it reads FER. The helical transmembrane segment at 891–911 threads the bilayer; the sequence is WCIGLYNVMFTAMPPLTLGIF. Over 912 to 939 the chain is Cytoplasmic; that stretch reads ERSCRKENMLKYPELYKTSQNALDFNTK. Residues 940-960 traverse the membrane as a helical segment; the sequence is VFWVHCLNGLFHSVILFWFPL. Residues 961-977 are Exoplasmic loop-facing; sequence KALQYGTVFGNGKTSDY. Residues 978–998 form a helical membrane-spanning segment; it reads LLLGNFVYTFVVITVCLKAGL. The Cytoplasmic portion of the chain corresponds to 999 to 1008; it reads ETSYWTWFSH. The helical transmembrane segment at 1009–1029 threads the bilayer; sequence IAIWGSIALWVVFFGIYSSLW. At 1030 to 1044 the chain is on the exoplasmic loop side; the sequence is PAVPMAPDMSGEAAM. The helical transmembrane segment at 1045–1065 threads the bilayer; that stretch reads LFSSGVFWVGLLSIPVASLLL. The Cytoplasmic portion of the chain corresponds to 1066 to 1164; it reads DVLYKVIKRT…DTTKQRPDEW (99 aa). Position 1095 to 1102 (1095 to 1102) interacts with ATP; it reads GAVVLGKS. Phosphoserine is present on S1126.

Belongs to the cation transport ATPase (P-type) (TC 3.A.3) family. Type IV subfamily. In terms of assembly, component of a P4-ATPase flippase complex which consists of a catalytic alpha subunit and an accessory beta subunit. Interacts with TMEM30A to form a flippase complex; this complex forms an intermediate phosphoenzyme. Interacts with TMEM30B; this interaction is reported conflictingly. Mg(2+) is required as a cofactor. Cleaved by calpain in a caspase- and calcium influx-dependent manner only during platelet apoptosis and may lead to inactivation. As to expression, found in most tissues except liver and testis. Most abundant in brain and lung. Also detected in fetal tissues. Isoform 1 is expressed in brain. Isoform 2 and isoform 3 are expressed in reticulocytes. Expressed in mouse hippocampus in both dentate gyrus (DG) and the CA3 regions. Expressed in both neuronal as well as non-neuronal cells within the DG. Highly expressed in platelets.

The protein resides in the cytoplasmic vesicle. It localises to the secretory vesicle. It is found in the chromaffin granule membrane. Its subcellular location is the cytoplasmic granule. The protein localises to the cell membrane. The protein resides in the endoplasmic reticulum. It localises to the golgi apparatus. It is found in the endomembrane system. The catalysed reaction is ATP + H2O + phospholipidSide 1 = ADP + phosphate + phospholipidSide 2.. The enzyme catalyses a 1,2-diacyl-sn-glycero-3-phospho-L-serine(out) + ATP + H2O = a 1,2-diacyl-sn-glycero-3-phospho-L-serine(in) + ADP + phosphate + H(+). With respect to regulation, ATPase activity is stimulated by phosphatidylserine (PS) and minimally by phosphatidylethanolamine (PE). ATPase activity is inhibited by the vanadate and by the presence of calcium. In terms of biological role, catalytic component of a P4-ATPase flippase complex which catalyzes the hydrolysis of ATP coupled to the transport of aminophospholipids from the outer to the inner leaflet of various membranes and ensures the maintenance of asymmetric distribution of phospholipids. Phospholipid translocation also seems to be implicated in vesicle formation and in uptake of lipid signaling molecules. In vitro, its ATPase activity is selectively and stereospecifically stimulated by phosphatidylserine (PS). The flippase complex ATP8A1:TMEM30A seems to play a role in regulation of cell migration probably involving flippase-mediated translocation of phosphatidylethanolamine (PE) at the cell membrane. Acts as aminophospholipid translocase at the cell membrane in neuronal cells; the activity is associated with hippocampus-dependent learning. May play a role in brain connectivity. This Mus musculus (Mouse) protein is Phospholipid-transporting ATPase IA.